The sequence spans 1173 residues: Fas-binding factor 1 (1173 aa).

The segment at 17–168 is disordered; the sequence is MALRTKKGLK…PSSSKTGLQY (152 aa). A compositionally biased stretch (basic and acidic residues) spans 46-56; the sequence is KPAEPASHAKD. Positions 80-93 are enriched in low complexity; that stretch reads AGADAEASSVSDAD. The residue at position 172 (Ser-172) is a Phosphoserine. 2 disordered regions span residues 180 to 225 and 241 to 566; these read LAGL…GDTP and TTLG…SSRE. The span at 206–216 shows a compositional bias: low complexity; that stretch reads SPGAAAGQGPS. 2 stretches are compositionally biased toward basic and acidic residues: residues 247 to 258 and 287 to 299; these read DSPKAERKKTGD and TGER…DKKY. 4 stretches are compositionally biased toward polar residues: residues 331–345, 396–411, 468–477, and 533–544; these read VASS…QSVS, SPVQ…MTPS, VISQKKSQNL, and TGSSMSWSQATT. Coiled-coil stretches lie at residues 617–742, 808–917, and 975–1057; these read TAQL…QQAS, QQRE…MNKC, and CELR…VQRQ. Residue Lys-1002 forms a Glycyl lysine isopeptide (Lys-Gly) (interchain with G-Cter in SUMO2) linkage. The tract at residues 1091–1124 is disordered; it reads ASLPGLPPRVQGPAASSRDAVQAPASSSPQCSQP. Residues 1110-1124 show a composition bias toward low complexity; the sequence is AVQAPASSSPQCSQP.

Interacts with PARD3. May interact with FAS cytoplasmic domain. Interacts with TRAPPC14. Broadly expressed.

The protein localises to the cytoplasm. The protein resides in the cytoskeleton. It localises to the microtubule organizing center. Its subcellular location is the centrosome. It is found in the centriole. The protein localises to the spindle pole. The protein resides in the cell junction. Its function is as follows. Keratin-binding protein required for epithelial cell polarization. Involved in apical junction complex (AJC) assembly via its interaction with PARD3. Required for ciliogenesis. The sequence is that of Fas-binding factor 1 (Fbf1) from Mus musculus (Mouse).